The sequence spans 409 residues: Elongation factor Tu, chloroplastic (409 aa).

One can recognise a tr-type G domain in the interval K10–E214. The G1 stretch occupies residues G19–T26. Residue G19–T26 participates in GTP binding. T26 is a binding site for Mg(2+). Residues G60–N64 form a G2 region. The tract at residues D81–G84 is G3. GTP is bound by residues D81–H85 and N136–D139. Positions N136–D139 are G4. The tract at residues S174–L176 is G5.

This sequence belongs to the TRAFAC class translation factor GTPase superfamily. Classic translation factor GTPase family. EF-Tu/EF-1A subfamily.

The protein resides in the plastid. The protein localises to the chloroplast. It catalyses the reaction GTP + H2O = GDP + phosphate + H(+). Its function is as follows. GTP hydrolase that promotes the GTP-dependent binding of aminoacyl-tRNA to the A-site of ribosomes during protein biosynthesis. This Pyropia yezoensis (Susabi-nori) protein is Elongation factor Tu, chloroplastic (tufA).